Here is a 111-residue protein sequence, read N- to C-terminus: WAP four-disulfide core domain protein 12 (111 aa).

Positions 1–23 are cleaved as a signal peptide; that stretch reads MGSSSFLVLMVSLALVTLVAAEG. Residues 27–74 enclose the WAP domain; that stretch reads GIEKAGVCPADNIRCFKSDPPQCHTDQDCLGERKCCYLHCGFKCVIPV. Disulfide bonds link cysteine 34-cysteine 62, cysteine 41-cysteine 66, cysteine 49-cysteine 61, and cysteine 55-cysteine 70. The segment at 80 to 111 is disordered; the sequence is GGNKDEDVSGPCPEPGWEAKSPGSSSTGCPQK. Polar residues predominate over residues 101-111; that stretch reads PGSSSTGCPQK.

It is found in the secreted. Its function is as follows. Antibacterial protein. Putative acid-stable proteinase inhibitor. The protein is WAP four-disulfide core domain protein 12 (WFDC12) of Macaca mulatta (Rhesus macaque).